Consider the following 362-residue polypeptide: tRNA-specific 2-thiouridylase MnmA 3 (362 aa).

Residues 11–18 and M37 contribute to the ATP site; that span reads GMSGGIDS. The active-site Nucleophile is the C91. C91 and C188 are disulfide-bonded. An ATP-binding site is contributed by G115. Residues 137-139 are interaction with tRNA; sequence KDQ. C188 (cysteine persulfide intermediate) is an active-site residue. Residues 296–297 are interaction with tRNA; the sequence is RY.

The protein belongs to the MnmA/TRMU family.

It is found in the cytoplasm. The catalysed reaction is S-sulfanyl-L-cysteinyl-[protein] + uridine(34) in tRNA + AH2 + ATP = 2-thiouridine(34) in tRNA + L-cysteinyl-[protein] + A + AMP + diphosphate + H(+). Catalyzes the 2-thiolation of uridine at the wobble position (U34) of tRNA, leading to the formation of s(2)U34. In Bacteroides fragilis (strain ATCC 25285 / DSM 2151 / CCUG 4856 / JCM 11019 / LMG 10263 / NCTC 9343 / Onslow / VPI 2553 / EN-2), this protein is tRNA-specific 2-thiouridylase MnmA 3.